Consider the following 550-residue polypeptide: Dipeptide-binding protein (550 aa).

An N-terminal signal peptide occupies residues 1–22 (MKQAKIIGLSTVIALSGIILVA). Cys-23 carries the N-palmitoyl cysteine lipid modification. Cys-23 is lipidated: S-diacylglycerol cysteine.

The protein belongs to the bacterial solute-binding protein 5 family. The complex is composed of two ATP-binding proteins (DppD and DppF), two transmembrane proteins (DppB and DppC) and a solute-binding protein (DppA).

The protein resides in the cell membrane. In terms of biological role, part of the ABC transporter DppABCDF involved in dipeptide transport. Binds di- and tripeptides with high affinity. Requires a free N-terminal alpha-amino group and an alpha-peptide bound contiguous with the N-terminal amino group, has a strong selectivity for L-residues, and shows preference for dipeptides containing methionine or arginine, followed by hydrophobic tripeptides consisting of leucine or valine residues. In Lactococcus lactis subsp. cremoris (strain MG1363), this protein is Dipeptide-binding protein.